The primary structure comprises 138 residues: Cysteine desulfuration protein SufE (138 aa).

Cys-51 (cysteine persulfide intermediate) is an active-site residue.

The protein belongs to the SufE family. In terms of assembly, homodimer. Interacts with SufS.

It localises to the cytoplasm. It participates in cofactor biosynthesis; iron-sulfur cluster biosynthesis. Participates in cysteine desulfuration mediated by SufS. Cysteine desulfuration mobilizes sulfur from L-cysteine to yield L-alanine and constitutes an essential step in sulfur metabolism for biosynthesis of a variety of sulfur-containing biomolecules. Functions as a sulfur acceptor for SufS, by mediating the direct transfer of the sulfur atom from the S-sulfanylcysteine of SufS, an intermediate product of cysteine desulfuration process. The sequence is that of Cysteine desulfuration protein SufE from Sodalis glossinidius (strain morsitans).